The primary structure comprises 391 residues: Succinyl-diaminopimelate desuccinylase (391 aa).

His67 provides a ligand contact to Zn(2+). The active site involves Asp69. Residue Asp101 participates in Zn(2+) binding. Glu135 serves as the catalytic Proton acceptor. 3 residues coordinate Zn(2+): Glu136, Glu164, and His353.

The protein belongs to the peptidase M20A family. DapE subfamily. Homodimer. It depends on Zn(2+) as a cofactor. Co(2+) is required as a cofactor.

The enzyme catalyses N-succinyl-(2S,6S)-2,6-diaminopimelate + H2O = (2S,6S)-2,6-diaminopimelate + succinate. It participates in amino-acid biosynthesis; L-lysine biosynthesis via DAP pathway; LL-2,6-diaminopimelate from (S)-tetrahydrodipicolinate (succinylase route): step 3/3. Functionally, catalyzes the hydrolysis of N-succinyl-L,L-diaminopimelic acid (SDAP), forming succinate and LL-2,6-diaminopimelate (DAP), an intermediate involved in the bacterial biosynthesis of lysine and meso-diaminopimelic acid, an essential component of bacterial cell walls. The sequence is that of Succinyl-diaminopimelate desuccinylase from Rickettsia bellii (strain OSU 85-389).